We begin with the raw amino-acid sequence, 833 residues long: Ventricular zone-expressed PH domain-containing protein 1 (833 aa).

Interaction with TGFBR1 regions lie at residues 201-319 (AELL…LANM) and 663-833 (ESTF…TTYL). Positions 716–819 (QPLIEGKLKE…WLQCINVALA (104 aa)) constitute a PH domain.

The protein belongs to the MELT/VEPH family. As to quaternary structure, interacts with TGFBR1. As to expression, specifically expressed in kidney and eye. In the eye, expressed in retinal pigmented epithelium but not in the neural retina.

Its subcellular location is the cell membrane. Interacts with TGF-beta receptor type-1 (TGFBR1) and inhibits dissociation of activated SMAD2 from TGFBR1, impeding its nuclear accumulation and resulting in impaired TGF-beta signaling. May also affect FOXO, Hippo and Wnt signaling. The chain is Ventricular zone-expressed PH domain-containing protein 1 (Veph1) from Mus musculus (Mouse).